Consider the following 272-residue polypeptide: Phosphate import ATP-binding protein PstB (272 aa).

Residues 26–267 (VAARNLNFYY…PADRRTQDYI (242 aa)) form the ABC transporter domain. 58 to 65 (GPSGCGKS) is an ATP binding site.

The protein belongs to the ABC transporter superfamily. Phosphate importer (TC 3.A.1.7) family. As to quaternary structure, the complex is composed of two ATP-binding proteins (PstB), two transmembrane proteins (PstC and PstA) and a solute-binding protein (PstS).

Its subcellular location is the cell inner membrane. It catalyses the reaction phosphate(out) + ATP + H2O = ADP + 2 phosphate(in) + H(+). In terms of biological role, part of the ABC transporter complex PstSACB involved in phosphate import. Responsible for energy coupling to the transport system. The chain is Phosphate import ATP-binding protein PstB from Nitrobacter hamburgensis (strain DSM 10229 / NCIMB 13809 / X14).